The following is a 365-amino-acid chain: NAD(P)H-quinone oxidoreductase subunit 1, chloroplastic (365 aa).

Transmembrane regions (helical) follow at residues 30-50, 104-124, 129-149, 253-273, 302-322, and 338-358; these read LVPI…IVWL, IAVI…HFVL, IGVF…LMSG, FGLF…FVAV, VFGT…FLFI, and LLNL…LLTT.

Belongs to the complex I subunit 1 family. As to quaternary structure, NDH is composed of at least 16 different subunits, 5 of which are encoded in the nucleus.

The protein resides in the plastid. The protein localises to the chloroplast thylakoid membrane. The catalysed reaction is a plastoquinone + NADH + (n+1) H(+)(in) = a plastoquinol + NAD(+) + n H(+)(out). It carries out the reaction a plastoquinone + NADPH + (n+1) H(+)(in) = a plastoquinol + NADP(+) + n H(+)(out). In terms of biological role, NDH shuttles electrons from NAD(P)H:plastoquinone, via FMN and iron-sulfur (Fe-S) centers, to quinones in the photosynthetic chain and possibly in a chloroplast respiratory chain. The immediate electron acceptor for the enzyme in this species is believed to be plastoquinone. Couples the redox reaction to proton translocation, and thus conserves the redox energy in a proton gradient. In Populus trichocarpa (Western balsam poplar), this protein is NAD(P)H-quinone oxidoreductase subunit 1, chloroplastic.